The primary structure comprises 49 residues: MPYDQDSFSTLLGFLQASRKYSEFTLKCPICIYVPCQCFAVGFLKQSDQ.

This is an uncharacterized protein from Homo sapiens (Human).